The following is an 83-amino-acid chain: Cytochrome b559 subunit alpha (83 aa).

A helical membrane pass occupies residues 21–35 (IIHSITIPSLFIAGW). H23 lines the heme pocket.

It belongs to the PsbE/PsbF family. As to quaternary structure, heterodimer of an alpha subunit and a beta subunit. PSII is composed of 1 copy each of membrane proteins PsbA, PsbB, PsbC, PsbD, PsbE, PsbF, PsbH, PsbI, PsbJ, PsbK, PsbL, PsbM, PsbT, PsbX, PsbY, PsbZ, Psb30/Ycf12, at least 3 peripheral proteins of the oxygen-evolving complex and a large number of cofactors. It forms dimeric complexes. Heme b serves as cofactor.

The protein localises to the plastid. Its subcellular location is the chloroplast thylakoid membrane. Its function is as follows. This b-type cytochrome is tightly associated with the reaction center of photosystem II (PSII). PSII is a light-driven water:plastoquinone oxidoreductase that uses light energy to abstract electrons from H(2)O, generating O(2) and a proton gradient subsequently used for ATP formation. It consists of a core antenna complex that captures photons, and an electron transfer chain that converts photonic excitation into a charge separation. The chain is Cytochrome b559 subunit alpha from Lotus japonicus (Lotus corniculatus var. japonicus).